The sequence spans 172 residues: Spermidine/spermine N(1)-acetyltransferase (172 aa).

Residues 3-172 (VKMKKCSRED…TDLIMAKTLI (170 aa)) enclose the N-acetyltransferase domain. Residues 96 to 98 (IYI), 105 to 109 (HGLGK), and 135 to 137 (NEN) each bind acetyl-CoA. The Proton donor role is filled by Tyr-142. Lys-144 is an acetyl-CoA binding site.

Belongs to the acetyltransferase family. Monomer.

It catalyses the reaction an alkane-alpha,omega-diamine + acetyl-CoA = an N-acetylalkane-alpha,omega-diamine + CoA + H(+). Involved in the protection against polyamine toxicity by regulating their concentration. Could also be involved in the negative control of sporulation as well as production of degradative enzymes such as alpha-amylase, levansucrase and alkaline phosphatase. Catalyzes the transfer of an acetyl group from acetyl coenzyme A (AcCoA) to an acceptor substrate and releases both CoA and the acetylated product. It possesses N1-acetyltransferase activity toward polyamine substrates including spermidine, spermine, aminopropylcadaverine, norspermidine, homospermidine, N(8)-acetylspermidine, diaminopropane and agmatine. The chain is Spermidine/spermine N(1)-acetyltransferase from Bacillus subtilis (strain 168).